Reading from the N-terminus, the 79-residue chain is Ixosin (79 aa).

Positions 1–56 (MSAHKVQIGLSSGQFRVALQVPSVRLKGLGSFHTGSIVLPSQGSLREDQISLHNQD) are cleaved as a propeptide — removed in mature form.

Has antifungal activity against C.albicans. Has antibacterial activity against the Gram-positive bacterium S.aureus and the Gram-negative bacterium E.coli. Lacks hemolytic activity against rabbit erythrocytes. The protein is Ixosin of Ixodes sinensis (Hard tick).